The chain runs to 303 residues: Probable RuBisCO transcriptional regulator (303 aa).

The HTH lysR-type domain occupies 6–63 (FTLDQLRIFQAIVVEGSFQKAAQSLYISQPAVSLQIQNLEQQLNAPLFDRSHRKAKLT). The segment at residues 23 to 42 (FQKAAQSLYISQPAVSLQIQ) is a DNA-binding region (H-T-H motif).

Belongs to the LysR transcriptional regulatory family.

It is found in the plastid. The protein localises to the chloroplast. Its function is as follows. Trans-acting transcriptional regulator of RuBisCO genes (rbcL and rbcS) expression. In Cyanidioschyzon merolae (strain NIES-3377 / 10D) (Unicellular red alga), this protein is Probable RuBisCO transcriptional regulator (rbcR).